The chain runs to 363 residues: Trans-2,3-enoyl-CoA reductase-like (363 aa).

Serine 37 carries the post-translational modification Phosphoserine. The next 4 membrane-spanning stretches (helical) occupy residues 143–163 (WTTV…LFYL), 216–235 (NLLK…AYYI), 250–270 (VAIS…INVV), and 311–331 (ISFT…LMSI).

Belongs to the steroid 5-alpha reductase family.

It localises to the membrane. Its subcellular location is the endoplasmic reticulum. This Bos taurus (Bovine) protein is Trans-2,3-enoyl-CoA reductase-like (TECRL).